We begin with the raw amino-acid sequence, 445 residues long: MNEEYDVIVLGTGLTECILSGIMSVNGKKVLHMDRNPYYGGESASITPLEDLYKRYKIPGSPPESMGRGRDWNVDLIPKFLMANGQLVKMLLYTEVTRYLDFKVTEGSFVYKGGKIYKVPSTEAEALASSLMGLFEKRRFRKFLVYVANFDEKDPRTFEGIDPKKTTMRDVYKKFDLGQDVIDFTGHALALYRTDDYLDQPCYETINRIKLYSESLARYGKSPYLYPLYGLGELPQGFARLSAIYGGTYMLNKPIEEIIVQNGKVIGVKSEGEIARCKQLICDPSYVKDRVEKVGQVIRVICILSHPIKNTNDANSCQIIIPQNQVNRKSDIYVCMISFAHNVAAQGKYIAIVSTTVETKEPEKEIRPALELLEPIEQKFVSISDLLVPKDLGTESLIFISRTYDATTHFETTCDDIKNIYKRMTGSEFDFEEMKRKKNDIYGED.

N-acetylmethionine is present on Met-1. Lys-57 is modified (N6-succinyllysine). Lys-112 carries the post-translational modification N6-acetyllysine. Position 130 is a phosphoserine (Ser-130). N6-acetyllysine is present on Lys-269. Position 382 is a phosphoserine (Ser-382).

It belongs to the Rab GDI family. Interacts with RHOH. Interacts with the GDP-bound inactive forms of RAB3A, RAB3B, RAB3C, RAB5A, RAB5B, RAB5C, RAB8A, RAB8B, RAB10, RAB12, RAB35, and RAB43; binds RAB3D to a lesser extent. Interacts with DZIP1; this interaction negatively regulates the interaction of GDI2 with GDP-bound RAB8A.

Its subcellular location is the cytoplasm. It localises to the membrane. The protein localises to the golgi apparatus. It is found in the trans-Golgi network. In terms of biological role, GDP-dissociation inhibitor preventing the GDP to GTP exchange of most Rab proteins. By keeping these small GTPases in their inactive GDP-bound form regulates intracellular membrane trafficking. Negatively regulates protein transport to the cilium and ciliogenesis through the inhibition of RAB8A. This Pongo abelii (Sumatran orangutan) protein is Rab GDP dissociation inhibitor beta (GDI2).